A 323-amino-acid polypeptide reads, in one-letter code: Muscleblind-like protein 3 (323 aa).

C3H1-type zinc fingers lie at residues 13-41 (WLTL…HPSR), 47-73 (NGRV…HPPP), 177-205 (TDKL…HPLE), and 213-239 (ENSV…HPPA).

It belongs to the muscleblind family. In terms of tissue distribution, expressed in fast and slow myotomal muscle, heart, liver, skin, brain and testis.

The protein resides in the nucleus. Its subcellular location is the cytoplasm. Involved in pre-mRNA alternative splicing regulation. Could inhibit terminal muscle differentiation, acting at approximately the time of myogenin induction. This is Muscleblind-like protein 3 (mbnl3) from Takifugu rubripes (Japanese pufferfish).